Here is a 316-residue protein sequence, read N- to C-terminus: Leucine-rich repeat-containing protein 73 (316 aa).

LRR repeat units lie at residues 57-78 (SLAQ…KQLA), 86-106 (SIQS…ALLN), 114-137 (ALVA…CGLL), 145-166 (GLKE…SRLA), 174-187 (QVRV…PLGD), 202-223 (TLEV…TLLD), and 231-250 (ALRS…QQQI). The tract at residues 257–296 (GEEEEEVAGGAGDTQEWERGREPAAHQRGSSSWMCPSDPS) is disordered. Over residues 272 to 281 (EWERGREPAA) the composition is skewed to basic and acidic residues. The segment covering 286-296 (SSSWMCPSDPS) has biased composition (low complexity).

In Homo sapiens (Human), this protein is Leucine-rich repeat-containing protein 73 (LRRC73).